The following is a 219-amino-acid chain: Uracil-DNA glycosylase (219 aa).

Asp59 serves as the catalytic Proton acceptor.

It belongs to the uracil-DNA glycosylase (UDG) superfamily. UNG family.

It localises to the cytoplasm. The catalysed reaction is Hydrolyzes single-stranded DNA or mismatched double-stranded DNA and polynucleotides, releasing free uracil.. In terms of biological role, excises uracil residues from the DNA which can arise as a result of misincorporation of dUMP residues by DNA polymerase or due to deamination of cytosine. The chain is Uracil-DNA glycosylase from Staphylococcus haemolyticus (strain JCSC1435).